A 407-amino-acid polypeptide reads, in one-letter code: Imidazolonepropionase (407 aa).

Fe(3+) contacts are provided by His68 and His70. 2 residues coordinate Zn(2+): His68 and His70. Arg77, Tyr140, and His173 together coordinate 4-imidazolone-5-propanoate. Tyr140 contributes to the N-formimidoyl-L-glutamate binding site. His238 is a Fe(3+) binding site. Position 238 (His238) interacts with Zn(2+). 4-imidazolone-5-propanoate is bound at residue Gln241. Asp313 serves as a coordination point for Fe(3+). Asp313 contributes to the Zn(2+) binding site. N-formimidoyl-L-glutamate-binding residues include Asn315 and Gly317. Thr318 is a 4-imidazolone-5-propanoate binding site.

This sequence belongs to the metallo-dependent hydrolases superfamily. HutI family. The cofactor is Zn(2+). Fe(3+) is required as a cofactor.

It localises to the cytoplasm. The enzyme catalyses 4-imidazolone-5-propanoate + H2O = N-formimidoyl-L-glutamate. It participates in amino-acid degradation; L-histidine degradation into L-glutamate; N-formimidoyl-L-glutamate from L-histidine: step 3/3. In terms of biological role, catalyzes the hydrolytic cleavage of the carbon-nitrogen bond in imidazolone-5-propanoate to yield N-formimidoyl-L-glutamate. It is the third step in the universal histidine degradation pathway. This Burkholderia pseudomallei (strain 668) protein is Imidazolonepropionase.